The following is a 54-amino-acid chain: Large ribosomal subunit protein eL37 (54 aa).

Positions 20, 23, 35, and 38 each coordinate Zn(2+). The segment at 20–38 (CRRCGHHTYNVRTKRCSHC) adopts a C4-type zinc-finger fold.

This sequence belongs to the eukaryotic ribosomal protein eL37 family. Requires Zn(2+) as cofactor.

Functionally, binds to the 23S rRNA. In Thermoplasma acidophilum (strain ATCC 25905 / DSM 1728 / JCM 9062 / NBRC 15155 / AMRC-C165), this protein is Large ribosomal subunit protein eL37 (rpl37e).